The sequence spans 380 residues: tRNA-specific 2-thiouridylase MnmA (380 aa).

ATP contacts are provided by residues Ala-26–Ser-33 and Leu-52. The active-site Nucleophile is Cys-120. A disulfide bridge connects residues Cys-120 and Cys-217. Gly-144 is a binding site for ATP. An interaction with tRNA region spans residues Arg-166 to Gln-168. Catalysis depends on Cys-217, which acts as the Cysteine persulfide intermediate.

Belongs to the MnmA/TRMU family.

The protein resides in the cytoplasm. The enzyme catalyses S-sulfanyl-L-cysteinyl-[protein] + uridine(34) in tRNA + AH2 + ATP = 2-thiouridine(34) in tRNA + L-cysteinyl-[protein] + A + AMP + diphosphate + H(+). Catalyzes the 2-thiolation of uridine at the wobble position (U34) of tRNA, leading to the formation of s(2)U34. In Roseobacter denitrificans (strain ATCC 33942 / OCh 114) (Erythrobacter sp. (strain OCh 114)), this protein is tRNA-specific 2-thiouridylase MnmA.